A 404-amino-acid polypeptide reads, in one-letter code: Putative CBL-interacting protein kinase 27 (404 aa).

The Protein kinase domain maps to 11-266 (YEMGRVLGHG…VAGLLETPWF (256 aa)). Residues 17 to 25 (LGHGNFGRV) and lysine 40 each bind ATP. Aspartate 134 (proton acceptor) is an active-site residue. The activation loop stretch occupies residues 152–181 (DFGLSALACHARPDGLLHTACGTPAYVAPE). Residues 294 to 321 (DKDEPPEVLNAFHLISLSEGFDLSPLFE) enclose the NAF domain. Residues 335 to 356 (AGGTRFATREAASGVVARLEAL) form a PPI region.

Belongs to the protein kinase superfamily. CAMK Ser/Thr protein kinase family. SNF1 subfamily. Requires Mn(2+) as cofactor.

It catalyses the reaction L-seryl-[protein] + ATP = O-phospho-L-seryl-[protein] + ADP + H(+). The catalysed reaction is L-threonyl-[protein] + ATP = O-phospho-L-threonyl-[protein] + ADP + H(+). CIPK serine-threonine protein kinases interact with CBL proteins. Binding of a CBL protein to the regulatory NAF domain of CIPK protein lead to the activation of the kinase in a calcium-dependent manner. The chain is Putative CBL-interacting protein kinase 27 (CIPK27) from Oryza sativa subsp. japonica (Rice).